A 351-amino-acid chain; its full sequence is O-methyltransferase apf6 (351 aa).

S-adenosyl-L-methionine is bound by residues 231-232 (GG), 279-280 (NF), and Arg-295. His-299 functions as the Proton acceptor in the catalytic mechanism.

This sequence belongs to the class I-like SAM-binding methyltransferase superfamily. Cation-independent O-methyltransferase family.

It functions in the pathway secondary metabolite biosynthesis. O-methyltransferase; part of the gene cluster that mediates the biosynthesis of the cyclic tetrapeptide apicidin F (APF). The non-ribosomal peptide synthetase apf1 incorporates four different amino acids to produce apicidin F: L-phenylalanine, D-pipecolic acid (D-pip), N-methoxy-L-tryptophan and L-2-aminooctanedioic acid. L-Phenylalanine is the only proteinogenic amino acid directly used by apf1. The 3 other apf1 substrates are non-proteinogenic and have to be modified by other enzymes of the cluster. Lysine is converted to delta-1-pyrroline-5-carboxylate (P5C) which is reduced to L-pipecolic acid (L-pip) by apf3. L-pip is epimerized to D-pip, probably by apf1 activity, prior to incorporation. L-Tryptophan is N-oxidyzed by one of the cytochrome P450 monooxygenases (apf7 or apf8), and further methylated at the hydroxy group by the O-methyltransferase apf6 to yield N-methoxy-L-tryptophan. The synthesis of the fourth apf1 substrate is more complex. The fatty acid synthase apf5 is involved in the synthesis of the octanoic acid backbone of L-2-aminooctanedioic acid by fixing one acetyl-CoA unit and three malonyl-CoA units. Then one of the cytochrome P450 monooxygenases (apf7 or apf8) may oxidize this backbone to 2-oxooctanoic acid. The aminotransferase apf4 is predicted to catalyze the exchange of the keto group with an amino group. The next step would be the oxidation of 2-aminooctanoic acid by one of the cytochrome P450 monooxygenases (apf7 or apf8). The last step is the oxidation of 2-amino-8-hydroxyoctanoic acid to 2-aminooctanedioic acid is catalyzed by the FAD-dependent monooxygenase apf9. This is O-methyltransferase apf6 from Gibberella fujikuroi (strain CBS 195.34 / IMI 58289 / NRRL A-6831) (Bakanae and foot rot disease fungus).